Reading from the N-terminus, the 424-residue chain is MEPLDTLNLWMERARDRARAISFGRFLWHRFLDDRLFQAAAALAYTTVFALVPLAIVVFGVLSAFPVFDRWSDQLSDYVFSNFVPNAARAAEGYLRQFSASAGQLTAAGFIALVVSLLITLNSVEETFNQIWRVGSTRPKLTRFLVYWTVLTLGAMLAAASLAVSARVFAMPLFGTQEGRWLADLALRLAPILIEFVCITLMFRVVPHHTVKWRHAVPGAILAAVILELVKWGIGAYLGSFQSYQKLYGTVAFVPILLLWIYLCWVAVLLGASLSSSMAAFRYQPVELRLPQGYEFYGLLRLLGRFHHARAKGKGLADDEILRLEPMLTDSLLQDLACNLQEIGLLRRDERGEWLLARDLEQVSLSDLYECTQLRIPVAEQHLPYRDDTLGRVALAALDDLRLPLRERLKRKVSDIYTDSGDTP.

6 helical membrane-spanning segments follow: residues 48–68, 101–121, 144–164, 181–201, 216–236, and 251–271; these read VFALVPLAIVVFGVLSAFPVF, SAGQLTAAGFIALVVSLLITL, FLVYWTVLTLGAMLAAASLAV, WLADLALRLAPILIEFVCITL, AVPGAILAAVILELVKWGIGA, and VAFVPILLLWIYLCWVAVLLG.

Belongs to the UPF0761 family.

The protein localises to the cell inner membrane. The chain is UPF0761 membrane protein Smal_0716 from Stenotrophomonas maltophilia (strain R551-3).